Consider the following 480-residue polypeptide: Probable serine/threonine-protein phosphatase 2A regulatory subunit B'' subunit TON2 (480 aa).

EF-hand domains lie at 186-221 (VSLTQARIDMSELDEDSDGFLHSDEMESYIGGLIPN), 294-329 (TSAQRICDMFLALDKDMSGSLCKQELKEYADGTLTE), and 369-404 (DTPEGLTYLFRCLDLQGRGFLTTADIHSLFRDVHQK). Ca(2+)-binding residues include aspartate 307, aspartate 309, serine 311, serine 313, and glutamate 318.

As to quaternary structure, interacts with PP2AA1. In terms of tissue distribution, widely expressed.

The protein resides in the cytoplasm. It localises to the cytoskeleton. Its function is as follows. Probable regulatory subunit of type 2A protein phosphatase involved in the control of the dynamic organization of the cortical cytoskeleton. Plays an important role in the organization of interphase microtubule arrays in part through the regulation of nucleation geometry. Required for the reorganization of cortical arrays in response to light. This Arabidopsis thaliana (Mouse-ear cress) protein is Probable serine/threonine-protein phosphatase 2A regulatory subunit B'' subunit TON2 (TON2).